Here is a 334-residue protein sequence, read N- to C-terminus: Terpene synthase 1 (334 aa).

Asp-82 and Asp-86 together coordinate Mg(2+). The D(D/E)XX(D/E) motif motif lies at 82-86 (DDIFD). Arg-184 lines the substrate pocket. Mg(2+)-binding residues include Asn-230, Ser-234, and Glu-238. Positions 230–238 (NDIYSYHRE) match the NSE motif motif. Residues 309-316 (WSESCTRY) carry the WxxxxxRY motif motif.

The protein belongs to the terpene synthase family. It depends on Mg(2+) as a cofactor.

The enzyme catalyses (2E,6E)-farnesyl diphosphate = gamma-muurolene + diphosphate. It carries out the reaction (2E,6E)-farnesyl diphosphate = alpha-muurolene + diphosphate. The catalysed reaction is (2E,6E)-farnesyl diphosphate = (-)-(E)-beta-caryophyllene + diphosphate. It catalyses the reaction (2E)-geranyl diphosphate = beta-myrcene + diphosphate. Its function is as follows. Terpene synthase that catalyzes the cyclization of farnesyl diphosphate (FPP) into a mixture of sesquiterpenes with gamma-muurolene as the most abundant compound and (-)-beta-caryophyllene, alpha-muurolene, and 4 unidentified sesquiterpenes as minor compoundss. TPS1 also shows monoterpene synthase activity and can also use geranyl diphosphate (GPP) as a substrate to convert it into a mixture of cyclic and acyclic monoterpenes, including myrcene and linalool. P.polycephalum has a unique biology and these volatile terpenoids could function in internal communication of P.polycephalum, to mark the territory that have been explored, or they may be involved in chemotaxis. The polypeptide is Terpene synthase 1 (Physarum polycephalum (Slime mold)).